Here is a 147-residue protein sequence, read N- to C-terminus: Hemoglobin subunit beta (147 aa).

At valine 2 the chain carries N-acetylvaline. Residues 3 to 147 enclose the Globin domain; sequence HLTGEEKAAV…VANALAHKYH (145 aa). Phosphothreonine is present on threonine 13. Serine 45 carries the phosphoserine modification. Position 60 is an N6-acetyllysine (lysine 60). Position 64 (histidine 64) interacts with heme b. An N6-acetyllysine modification is found at lysine 83. Histidine 93 provides a ligand contact to heme b. Cysteine 94 bears the S-nitrosocysteine mark. Lysine 145 is subject to N6-acetyllysine.

This sequence belongs to the globin family. As to quaternary structure, heterotetramer of two alpha chains and two beta chains. In terms of tissue distribution, red blood cells.

In terms of biological role, involved in oxygen transport from the lung to the various peripheral tissues. This chain is Hemoglobin subunit beta (HBB), found in Ateles belzebuth (White-bellied spider monkey).